Here is a 232-residue protein sequence, read N- to C-terminus: Lipoprotein-releasing system ATP-binding protein LolD (232 aa).

In terms of domain architecture, ABC transporter spans 11 to 231; sequence VYLHDIKRQY…SIEDGVIVEL (221 aa). 47–54 contributes to the ATP binding site; that stretch reads APSGSGKS.

The protein belongs to the ABC transporter superfamily. Lipoprotein translocase (TC 3.A.1.125) family. As to quaternary structure, the complex is composed of two ATP-binding proteins (LolD) and two transmembrane proteins (LolC and LolE).

Its subcellular location is the cell inner membrane. In terms of biological role, part of the ABC transporter complex LolCDE involved in the translocation of mature outer membrane-directed lipoproteins, from the inner membrane to the periplasmic chaperone, LolA. Responsible for the formation of the LolA-lipoprotein complex in an ATP-dependent manner. This is Lipoprotein-releasing system ATP-binding protein LolD from Rhodopseudomonas palustris (strain BisB5).